Consider the following 1269-residue polypeptide: DNA-directed RNA polymerase subunit beta (1269 aa).

This sequence belongs to the RNA polymerase beta chain family. As to quaternary structure, the RNAP catalytic core consists of 2 alpha, 1 beta, 1 beta' and 1 omega subunit. When a sigma factor is associated with the core the holoenzyme is formed, which can initiate transcription.

The enzyme catalyses RNA(n) + a ribonucleoside 5'-triphosphate = RNA(n+1) + diphosphate. Functionally, DNA-dependent RNA polymerase catalyzes the transcription of DNA into RNA using the four ribonucleoside triphosphates as substrates. The protein is DNA-directed RNA polymerase subunit beta of Porphyromonas gingivalis (strain ATCC 33277 / DSM 20709 / CIP 103683 / JCM 12257 / NCTC 11834 / 2561).